The chain runs to 335 residues: Probable cytosolic iron-sulfur protein assembly protein Ciao1 (335 aa).

WD repeat units follow at residues 12 to 51, 57 to 96, 101 to 140, 146 to 185, 192 to 231, 250 to 289, and 301 to 335; these read GHKGRIWGVAWHPKGNVFASCGEDKAIRIWSLTGNTWGTK, GHKRTIREIRWSPCGQYLASASFDATTAIWSKSSGEFECN, GHENEVKSVSWSRSGGLLATCSRDKSVWIWEVAGDDEFEC, PHTQDVKRVVWHPTKDVLASASYDNTIKMFAEEPIDNDWD, SHTSTVWGIDFDADGERLVSCSDDTTIKIWRAYHPGNTAG, QHSRAIYDVSWCKLTGLIATACGDDGIRIFKETSDSKPDE, and AHDQDVNSVQWNPVVAGQLISCSDDGTIKIWKVSE.

This sequence belongs to the WD repeat CIA1 family.

In terms of biological role, essential component of the cytosolic iron-sulfur (Fe/S) protein assembly machinery. Required for the maturation of extramitochondrial Fe/S proteins. The protein is Probable cytosolic iron-sulfur protein assembly protein Ciao1 of Drosophila sechellia (Fruit fly).